The sequence spans 6733 residues: Replicase polyprotein 1ab (6733 aa).

In terms of domain architecture, Macro spans 1633–1814; sequence FNQYYEFKVG…QYIEALGVVE (182 aa). An HD1 region spans residues 2183 to 2565; sequence LTHVNKFKIV…IMLPVFVIIL (383 aa). 10 helical membrane-spanning segments follow: residues 2191–2211, 2219–2239, 2266–2286, 2411–2431, 2521–2541, 2546–2566, 2769–2789, 2937–2957, 2986–3006, and 3022–3042; these read IVVYLMVLWFVLLYCFSDFSL, VFLLWLSHVVLVVKKLDLGLV, GVHWLILKLLFYSFHFYDFFV, ALWFYVVFYSGFVSFWLPLMF, VAVSSLGFINPLMWPLFIVVL, FVWFFNVLSYIMLPVFVIILF, VMLIIALGAIFVFMYSCFMVG, IISPYVFVVLVAIFTIVFLFL, VLFVVCLPPLVPGVVFVLALW, and LFILPWFYVMLFVLIVGGFVF. An HD2 region spans residues 2769-3042; sequence VMLIIALGAI…FVLIVGGFVF (274 aa). Catalysis depends on charge relay system; for 3C-like serine proteinase activity residues H3184, E3222, and S3291. 7 helical membrane passes run 3422–3442, 3456–3478, 3486–3506, 3514–3534, 3538–3558, 3573–3593, and 3598–3613; these read SNVSWVVENLHFIFSVYFLVC, VVLPLFFVVQLLSTVVLKNVLFW, LAVTFYVHSEVAESMYLLGLF, VGLILVVSVMCLFVVVRVVVN, AIFVVVVSVLLIVVNVVLGVV, AVFAALLTPQPVVAIMMLILF, and LMSFAFVVIVLSFRVF. Residues 3430–3613 form an HD3 region; sequence NLHFIFSVYF…VVIVLSFRVF (184 aa). A NiRAN domain is found at 4442 to 4673; it reads DFKLLRDVWC…AKEMNVPADF (232 aa). A RdRp catalytic domain is found at 4981-5132; the sequence is FDVFGSDYTK…FSKPGALKIF (152 aa). Residues 5289 to 5404 enclose the CV ZBD domain; the sequence is FDRVCFCCPN…NGVAQLLTPV (116 aa). Zn(2+)-binding residues include C5293, C5296, C5304, C5307, C5314, C5317, H5321, H5327, C5336, C5338, C5359, and C5362. Positions 5509-5688 constitute a (+)RNA virus helicase ATP-binding domain; the sequence is NQPWRLATCF…LQLATQKRYL (180 aa). One can recognise a (+)RNA virus helicase C-terminal domain in the interval 5689–5848; that stretch reads TACYRCPPQI…FGMEKQSDFN (160 aa). Residues 5846 to 6059 form the ExoN domain; sequence DFNIIPEVAS…YLASYDAAFK (214 aa). Catalysis depends on residues D5860, E5862, and D5961. Residues H6025, C6029, and H6033 each coordinate Zn(2+). Active-site residues include H6037 and D6042. Position 6048 (C6048) interacts with Zn(2+). The NendoU domain occupies 6327–6467; that stretch reads LPETLFSTGR…GEDDIQTFYP (141 aa). Catalysis depends on residues H6363, H6380, K6412, K6509, D6585, K6613, and E6647. Positions 6469–6733 constitute a Nidovirus-type SAM-dependent 2'-O-MTase domain; that stretch reads KEFIRSYYEW…EVPLLCQMKH (265 aa).

Specific enzymatic cleavages in vivo by its own protease yield mature proteins. 3CL-PRO is autocatalytically processed.

It localises to the host membrane. It carries out the reaction RNA(n) + a ribonucleoside 5'-triphosphate = RNA(n+1) + diphosphate. The enzyme catalyses ATP + H2O = ADP + phosphate + H(+). The 3C-like serine proteinase is responsible for the majority of cleavages. Its function is as follows. The helicase which contains a zinc finger structure displays RNA and DNA duplex-unwinding activities with 5' to 3' polarity. Functionally, acts on both ssRNA and dsRNA in a 3' to 5' direction. In terms of biological role, nendoU is a Mn(2+)-dependent, uridylate-specific enzyme, which leaves 2'-3'-cyclic phosphates 5' to the cleaved bond. The sequence is that of Replicase polyprotein 1ab (rep) from Bos taurus (Bovine).